The following is a 173-amino-acid chain: Shikimate kinase 1 (173 aa).

An ATP-binding site is contributed by 14–19 (GAGKST). Ser-18 serves as a coordination point for Mg(2+). Residues Asp-36, Arg-60, and Gly-82 each coordinate substrate. Arg-120 is an ATP binding site. Arg-140 contributes to the substrate binding site. Residue Gln-157 coordinates ATP.

The protein belongs to the shikimate kinase family. In terms of assembly, monomer. The cofactor is Mg(2+).

It localises to the cytoplasm. It carries out the reaction shikimate + ATP = 3-phosphoshikimate + ADP + H(+). The protein operates within metabolic intermediate biosynthesis; chorismate biosynthesis; chorismate from D-erythrose 4-phosphate and phosphoenolpyruvate: step 5/7. Functionally, catalyzes the specific phosphorylation of the 3-hydroxyl group of shikimic acid using ATP as a cosubstrate. This is Shikimate kinase 1 from Yersinia pseudotuberculosis serotype O:1b (strain IP 31758).